Reading from the N-terminus, the 315-residue chain is Long form salivary protein D7L1 (315 aa).

The N-terminal stretch at 1-18 (MIIVAVLLSFLAHLLVQA) is a signal peptide. 2 cysteine pairs are disulfide-bonded: Cys37/Cys73 and Cys69/Cys128. Trp55 serves as a coordination point for thromboxane A2. Trp58 provides a ligand contact to leukotriene C4. A thromboxane A2-binding site is contributed by Tyr70. Residues Gly152 and Lys170 each contribute to the leukotriene C4 site. Lys170 contacts thromboxane A2. 2 disulfide bridges follow: Cys178-Cys211 and Cys252-Cys263.

It belongs to the PBP/GOBP family. In terms of tissue distribution, distal-lateral and median lobes of female salivary gland (at protein level). Not detected in male salivary gland (at protein level). Expressed in female salivary gland. Not detected in female carcass without salivary glands. Expressed in male salivary gland and other tissues.

It localises to the secreted. Modulates blood feeding of female mosquitoes on vertebrate species by binding and sequestering different mediators involved in the host response. Binds leukotriene C4, leukotriene D4, leukotriene E4 and stable analogs of thromboxane A2, U-46619 and carbocyclic TXA2. Binds weakly prostaglandins: PGD2, PGE2 and PGF2alpha. Does not bind leukotriene B4, biogenic amines, ADP, platelet activating phospholipid derivative PAF and arachidonic acid. Inhibits agonist-induced smooth muscle contraction. Inhibits platelet aggregation induced by low concentrations of collagen in thromboxane A2-dependent manner. This Anopheles stephensi (Indo-Pakistan malaria mosquito) protein is Long form salivary protein D7L1.